Reading from the N-terminus, the 699-residue chain is Elongation factor G 1 (699 aa).

The region spanning 8–290 (EHYRNIGICA…AVIEFLPSPS (283 aa)) is the tr-type G domain. GTP-binding positions include 17–24 (AHVDAGKT), 88–92 (DTPGH), and 142–145 (NKMD).

It belongs to the TRAFAC class translation factor GTPase superfamily. Classic translation factor GTPase family. EF-G/EF-2 subfamily.

It is found in the cytoplasm. Its function is as follows. Catalyzes the GTP-dependent ribosomal translocation step during translation elongation. During this step, the ribosome changes from the pre-translocational (PRE) to the post-translocational (POST) state as the newly formed A-site-bound peptidyl-tRNA and P-site-bound deacylated tRNA move to the P and E sites, respectively. Catalyzes the coordinated movement of the two tRNA molecules, the mRNA and conformational changes in the ribosome. This is Elongation factor G 1 from Vibrio parahaemolyticus serotype O3:K6 (strain RIMD 2210633).